We begin with the raw amino-acid sequence, 704 residues long: Capsule polysaccharide modification protein LipA (704 aa).

It is found in the cell inner membrane. Functionally, involved in the phospholipid modification of the capsular polysaccharide, a strong requirement for its translocation to the cell surface. This Neisseria meningitidis serogroup B (strain ATCC BAA-335 / MC58) protein is Capsule polysaccharide modification protein LipA (lipA).